Here is a 348-residue protein sequence, read N- to C-terminus: Zinc finger and SCAN domain-containing protein 16 (348 aa).

In terms of domain architecture, SCAN box spans 41-123; that stretch reads RQHFRKLCYQ…TVLEDLEREL (83 aa). 2 disordered regions span residues 160–184 and 205–226; these read PKKTQLEQEAGKPQRNGDKTRTKNE and RLNKDTPQHPKSKDIIENEGRS. Over residues 163-184 the composition is skewed to basic and acidic residues; it reads TQLEQEAGKPQRNGDKTRTKNE. 4 consecutive C2H2-type zinc fingers follow at residues 236 to 258, 264 to 286, 292 to 314, and 320 to 342; these read YKCDECGKSFSHSSDLSKHRRTH, YKCDECGKAFIQRSHLIGHHRVH, YKCKECGKDFSGRTGLIQHQRIH, and YECDECGRPFRVSSALIRHQRIH.

It belongs to the krueppel C2H2-type zinc-finger protein family.

Its subcellular location is the nucleus. In terms of biological role, may be involved in transcriptional regulation. This Homo sapiens (Human) protein is Zinc finger and SCAN domain-containing protein 16 (ZSCAN16).